The primary structure comprises 613 residues: tRNA 5-methylaminomethyl-2-thiouridine biosynthesis bifunctional protein MnmC (613 aa).

Residues 1-225 (MKKAKLIFKD…KREMIKAYLE (225 aa)) form a tRNA (mnm(5)s(2)U34)-methyltransferase region. Residues 252 to 613 (IGAGISSAVL…FLIRKLKKGL (362 aa)) are FAD-dependent cmnm(5)s(2)U34 oxidoreductase.

It in the N-terminal section; belongs to the methyltransferase superfamily. tRNA (mnm(5)s(2)U34)-methyltransferase family. This sequence in the C-terminal section; belongs to the DAO family. It depends on FAD as a cofactor.

Its subcellular location is the cytoplasm. The enzyme catalyses 5-aminomethyl-2-thiouridine(34) in tRNA + S-adenosyl-L-methionine = 5-methylaminomethyl-2-thiouridine(34) in tRNA + S-adenosyl-L-homocysteine + H(+). Catalyzes the last two steps in the biosynthesis of 5-methylaminomethyl-2-thiouridine (mnm(5)s(2)U) at the wobble position (U34) in tRNA. Catalyzes the FAD-dependent demodification of cmnm(5)s(2)U34 to nm(5)s(2)U34, followed by the transfer of a methyl group from S-adenosyl-L-methionine to nm(5)s(2)U34, to form mnm(5)s(2)U34. The sequence is that of tRNA 5-methylaminomethyl-2-thiouridine biosynthesis bifunctional protein MnmC from Campylobacter jejuni (strain RM1221).